The following is a 725-amino-acid chain: Homeobox protein unc-62 (725 aa).

The region spanning 133 to 218 (SSDVCSSASF…PLDIVGDERA (86 aa)) is the MEIS N-terminal domain. Disordered regions lie at residues 214–258 (GDER…PYEP), 295–317 (SSSS…LHST), 329–359 (VSSP…GNSM), 386–419 (SLHQ…PPPQ), 491–555 (VKME…KRKV), and 615–661 (IDQN…PDPT). Positions 219–239 (SSSQPPMSPGSMGHHGHSGSP) are enriched in low complexity. Residues 388-400 (HQHHLHHPHHFPH) show a composition bias toward basic residues. Residues 498-508 (SVSSSKSGGKK) are compositionally biased toward low complexity. The span at 541 to 550 (LSDSANGSQN) shows a compositional bias: polar residues. The homeobox; TALE-type DNA-binding region spans 552 to 614 (KRKVPKVFSK…NARRRIVQPM (63 aa)).

Belongs to the TALE/MEIS homeobox family.

It localises to the nucleus. Functionally, acts redundantly with ceh-20 and ceh-40 to perform overlapping roles during embryogenesis. Required for postembryonic development of the ectoderm, including the Q, V and P cell lineages, playing a crucial role in ensuring that these cells and their descendants undergo their invariant patterns of cell division, migration, fusion and morphogenesis. Has a role in the mig-13 pathway to promote anterior migration of neuroblasts in the Q lineage. Required for multiple roles in regulating vulva development. This is Homeobox protein unc-62 (unc-62) from Caenorhabditis briggsae.